The chain runs to 192 residues: Leucyl/phenylalanyl-tRNA--protein transferase (192 aa).

It belongs to the L/F-transferase family.

The protein localises to the cytoplasm. The catalysed reaction is N-terminal L-lysyl-[protein] + L-leucyl-tRNA(Leu) = N-terminal L-leucyl-L-lysyl-[protein] + tRNA(Leu) + H(+). The enzyme catalyses N-terminal L-arginyl-[protein] + L-leucyl-tRNA(Leu) = N-terminal L-leucyl-L-arginyl-[protein] + tRNA(Leu) + H(+). It carries out the reaction L-phenylalanyl-tRNA(Phe) + an N-terminal L-alpha-aminoacyl-[protein] = an N-terminal L-phenylalanyl-L-alpha-aminoacyl-[protein] + tRNA(Phe). Functions in the N-end rule pathway of protein degradation where it conjugates Leu, Phe and, less efficiently, Met from aminoacyl-tRNAs to the N-termini of proteins containing an N-terminal arginine or lysine. The chain is Leucyl/phenylalanyl-tRNA--protein transferase from Synechococcus sp. (strain JA-3-3Ab) (Cyanobacteria bacterium Yellowstone A-Prime).